A 1083-amino-acid chain; its full sequence is Error-prone DNA polymerase (1083 aa).

Belongs to the DNA polymerase type-C family. DnaE2 subfamily.

Its subcellular location is the cytoplasm. The enzyme catalyses DNA(n) + a 2'-deoxyribonucleoside 5'-triphosphate = DNA(n+1) + diphosphate. Functionally, DNA polymerase involved in damage-induced mutagenesis and translesion synthesis (TLS). It is not the major replicative DNA polymerase. The protein is Error-prone DNA polymerase of Xanthomonas oryzae pv. oryzae (strain KACC10331 / KXO85).